Consider the following 196-residue polypeptide: DnaA initiator-associating protein DiaA (196 aa).

Residues 34–196 enclose the SIS domain; that stretch reads LVQSLLNGNK…DSTLFPHQDE (163 aa).

The protein belongs to the SIS family. DiaA subfamily. Homotetramer; dimer of dimers.

Its function is as follows. Required for the timely initiation of chromosomal replication via direct interactions with the DnaA initiator protein. This chain is DnaA initiator-associating protein DiaA, found in Serratia proteamaculans (strain 568).